Here is an 83-residue protein sequence, read N- to C-terminus: Cytochrome b559 subunit alpha (83 aa).

Residues 21 to 35 (VIHSITIPSLFIAGW) form a helical membrane-spanning segment. Histidine 23 serves as a coordination point for heme.

The protein belongs to the PsbE/PsbF family. As to quaternary structure, heterodimer of an alpha subunit and a beta subunit. PSII is composed of 1 copy each of membrane proteins PsbA, PsbB, PsbC, PsbD, PsbE, PsbF, PsbH, PsbI, PsbJ, PsbK, PsbL, PsbM, PsbT, PsbX, PsbY, PsbZ, Psb30/Ycf12, at least 3 peripheral proteins of the oxygen-evolving complex and a large number of cofactors. It forms dimeric complexes. Heme b is required as a cofactor.

Its subcellular location is the plastid. The protein localises to the chloroplast thylakoid membrane. In terms of biological role, this b-type cytochrome is tightly associated with the reaction center of photosystem II (PSII). PSII is a light-driven water:plastoquinone oxidoreductase that uses light energy to abstract electrons from H(2)O, generating O(2) and a proton gradient subsequently used for ATP formation. It consists of a core antenna complex that captures photons, and an electron transfer chain that converts photonic excitation into a charge separation. In Physcomitrium patens (Spreading-leaved earth moss), this protein is Cytochrome b559 subunit alpha.